Reading from the N-terminus, the 255-residue chain is 5'-nucleotidase SurE (255 aa).

The a divalent metal cation site is built by D16, D17, S47, and N100.

This sequence belongs to the SurE nucleotidase family. A divalent metal cation is required as a cofactor.

The protein resides in the cytoplasm. It carries out the reaction a ribonucleoside 5'-phosphate + H2O = a ribonucleoside + phosphate. In terms of biological role, nucleotidase that shows phosphatase activity on nucleoside 5'-monophosphates. This Vibrio vulnificus (strain YJ016) protein is 5'-nucleotidase SurE.